Reading from the N-terminus, the 358-residue chain is Ion-translocating oxidoreductase complex subunit D (358 aa).

4 helical membrane passes run 19-39 (IMLWVILAMMPAFFTQIYYFG), 41-61 (GVVLQSALAIGTAIIAEFIAI), 79-99 (LTALILAMAIPPYAPYWIIII), and 125-145 (IGYVILLISFPLQMTTWMPPI). The residue at position 186 (threonine 186) is an FMN phosphoryl threonine. The next 5 helical transmembrane spans lie at 220–240 (FAQGWWQINVAFLAGGIFLIL), 248–268 (IPVAMLVTFFCLATATAFTGF), 271–291 (LSAISQLVSGAMMFGAFFIAT), 297–317 (SITPRGKIIFGALVGLFVYLI), and 321–341 (GNYPDGVAFAILLSNICVPLI).

This sequence belongs to the NqrB/RnfD family. In terms of assembly, the complex is composed of six subunits: RnfA, RnfB, RnfC, RnfD, RnfE and RnfG. Requires FMN as cofactor.

The protein localises to the cell inner membrane. Functionally, part of a membrane-bound complex that couples electron transfer with translocation of ions across the membrane. In Haemophilus influenzae (strain 86-028NP), this protein is Ion-translocating oxidoreductase complex subunit D.